A 539-amino-acid chain; its full sequence is Chaperonin GroEL (539 aa).

ATP contacts are provided by residues 30–33 (TLGP), lysine 51, 87–91 (DGTTT), glycine 415, 479–481 (NAA), and aspartate 495.

This sequence belongs to the chaperonin (HSP60) family. Forms a cylinder of 14 subunits composed of two heptameric rings stacked back-to-back. Interacts with the co-chaperonin GroES.

The protein localises to the cytoplasm. It catalyses the reaction ATP + H2O + a folded polypeptide = ADP + phosphate + an unfolded polypeptide.. Its function is as follows. Together with its co-chaperonin GroES, plays an essential role in assisting protein folding. The GroEL-GroES system forms a nano-cage that allows encapsulation of the non-native substrate proteins and provides a physical environment optimized to promote and accelerate protein folding. The protein is Chaperonin GroEL of Enterobacter agglomerans (Erwinia herbicola).